Here is a 314-residue protein sequence, read N- to C-terminus: Transcription factor SOX-12 (314 aa).

Disordered regions lie at residues Met-1–Ile-40 and Met-101–Pro-287. A DNA-binding region (HMG box) is located at residues Ile-40–Lys-108. Residues Arg-149–Ala-159 are compositionally biased toward gly residues. The span at Pro-162–Leu-173 shows a compositional bias: acidic residues. Residues Leu-174–Trp-187 are compositionally biased toward basic and acidic residues. The span at Pro-191 to Ser-217 shows a compositional bias: low complexity. A compositionally biased stretch (acidic residues) spans Ser-221–Thr-243. The interval Ser-282 to Tyr-314 is required for transcriptional activation activity and synergistic coactivation of transcriptional activity with POU3F2.

In terms of tissue distribution, expressed in splenic and thymic regulatory T-cells (at protein level). Expressed in embryonic molar and incisor teeth.

The protein localises to the nucleus. In terms of biological role, transcription factor that binds to DNA at the consensus sequence 5'-ACCAAAG-3'. Acts as a transcriptional activator. Binds cooperatively with POU3F2/BRN2 or POU3F1/OCT6 to gene promoters, which enhances transcriptional activation. Involved in the differentiation of naive CD4-positive T-cells into peripherally induced regulatory T (pT reg) cells under inflammatory conditions. Binds to the promoter region of the FOXP3 gene and promotes its transcription, and might thereby contribute to pT reg cell differentiation in the spleen and lymph nodes during inflammation. Plays a redundant role with SOX4 and SOX11 in cell survival of developing tissues such as the neural tube, branchial arches and somites, thereby contributing to organogenesis. The chain is Transcription factor SOX-12 (Sox12) from Mus musculus (Mouse).